The following is a 145-amino-acid chain: Prefoldin subunit alpha (145 aa).

This sequence belongs to the prefoldin alpha subunit family. As to quaternary structure, heterohexamer of two alpha and four beta subunits.

It localises to the cytoplasm. Its function is as follows. Molecular chaperone capable of stabilizing a range of proteins. Seems to fulfill an ATP-independent, HSP70-like function in archaeal de novo protein folding. The polypeptide is Prefoldin subunit alpha (Nitrosopumilus maritimus (strain SCM1)).